A 220-amino-acid chain; its full sequence is UPF0319 protein YccT (220 aa).

The signal sequence occupies residues 1 to 20 (MKTGALTTFLALCLPVTVFA).

The protein belongs to the UPF0319 family.

The sequence is that of UPF0319 protein YccT from Salmonella dublin (strain CT_02021853).